A 220-amino-acid chain; its full sequence is MHSLNQKIKAFSRDNLRKQCTRVTTLTGKKLIETWEDATVHVVETEPSGGGGCGYVQDLTLDLQVGVIKPWLLLGSQDAAHDLELLRKHKVTHILNVAYGVENAFLSEFTYKTISILDVPETNILSYFPECFEFIEQAKLKDGVVLVHCNAGVSRAAAIVIGFLMSSEEATFTTALSLVKEARPSICPNPGFMEQLRTYQVGKESNGGDKVPAEDTTHGL.

An N-acetylmethionine modification is found at methionine 1. Residues 64-205 (QVGVIKPWLL…LRTYQVGKES (142 aa)) enclose the Tyrosine-protein phosphatase domain. Cysteine 149 functions as the Phosphocysteine intermediate in the catalytic mechanism.

Belongs to the protein-tyrosine phosphatase family. Non-receptor class dual specificity subfamily.

It catalyses the reaction O-phospho-L-tyrosyl-[protein] + H2O = L-tyrosyl-[protein] + phosphate. It carries out the reaction O-phospho-L-seryl-[protein] + H2O = L-seryl-[protein] + phosphate. The enzyme catalyses O-phospho-L-threonyl-[protein] + H2O = L-threonyl-[protein] + phosphate. Phosphatase activity is enhanced by Ca(2+) and Mn(2+). In terms of biological role, has a dual specificity toward Ser/Thr and Tyr-containing proteins. The protein is Dual specificity protein phosphatase 19 of Mus musculus (Mouse).